The primary structure comprises 203 residues: MSTTTKSKMEGPKTVVVTCGATVPFPGLVNAVLDRRVLAELAQCGFSRVMVQYGRGFAAEFERQVGAAGAVRAACDAEGLEGCDAHAWRWQGLEIIGFAFHAQMESLIGTSAALVVSHAGTGSILDALRQQKPLIVCVNEALLDNHQEQIARRFEALGHLWAIRADVDELAGALARSTRETLAPLPPAYKQGFAELLQDVAHR.

This sequence belongs to the glycosyltransferase 28 family. As to quaternary structure, heterodimer with ALG14 to form a functional enzyme.

It is found in the endoplasmic reticulum. It catalyses the reaction an N-acetyl-alpha-D-glucosaminyl-diphospho-di-trans,poly-cis-dolichol + UDP-N-acetyl-alpha-D-glucosamine = an N,N'-diacetylchitobiosyl-diphospho-di-trans,poly-cis-dolichol + UDP + H(+). Functionally, involved in protein N-glycosylation. Essential for the second step of the dolichol-linked oligosaccharide pathway. The protein is UDP-N-acetylglucosamine transferase subunit ALG13 (ALG13) of Eremothecium gossypii (strain ATCC 10895 / CBS 109.51 / FGSC 9923 / NRRL Y-1056) (Yeast).